Here is a 694-residue protein sequence, read N- to C-terminus: Beta-galactosidase (694 aa).

Positions 1-31 (MGKRFPSGWFSPRVHPPRRQRSPMTNQATPG) are disordered. Residues 22–31 (SPMTNQATPG) are compositionally biased toward polar residues. Substrate is bound by residues R144 and N182. E183 serves as the catalytic Proton donor. Residue E341 is the Nucleophile of the active site. Residues W349 and 389 to 392 (EKFH) contribute to the substrate site.

It belongs to the glycosyl hydrolase 42 family. Homotrimer.

The catalysed reaction is Hydrolysis of terminal non-reducing beta-D-galactose residues in beta-D-galactosides.. With respect to regulation, strongly inhibited by glucose. No activity is lost during treatment with 100 mM EDTA after 2 hours. Activity not considerably affected by metal ions (5 mM), including Na(+), K(+), Mg(2+), Co(2+) and Ca(2+). Completely inhibited by Cu(2+) and Zn(2+) (5 mM) and is strongly inhibited by Mn(2+) (11%), Fe(2+) (25%) and Ni(2+) (38%) in comparison with the activity in the absence of cations (100%). Activity not affected by dithiothreitol, beta-mercaptoethanol and L-cysteine whereas reduced glutathione almost completely inactivates it. With ONPG as substrate, the addition of ethanol up to 20% still slightly stimulates activity. The activity increases up to 120% in the presence of 8% v/v ethanol at pH 5.5. Functionally, hydrolyzes p-nitrophenyl-beta-D-galactopyranoside (PNPG), o-nitrophenyl-beta-D-galactopyranoside (ONPG) and chromogen 5-bromo-4-chloro-3-indolyl-beta-D-galactopyranoside (X-gal), with highest activity against PNPG. Also acts on p-nitrophenyl-beta-D-glucopyranoside (PNPGlu) and o-nitrophenyl-beta-D-glucopyranoside (ONPGlu), but with significantly lower activity. The chain is Beta-galactosidase from Arthrobacter sp.